The following is a 520-amino-acid chain: Laccase (520 aa).

The first 21 residues, 1 to 21, serve as a signal peptide directing secretion; sequence MHTFLRSTALVVAGLSARALA. Plastocyanin-like domains are found at residues 22-148 and 160-304; these read SIGP…FVVY and VDDD…ILRY. Residue asparagine 75 is glycosylated (N-linked (GlcNAc...) asparagine). Residues histidine 85, histidine 87, histidine 130, and histidine 132 each contribute to the Cu cation site. 2 disulfides stabilise this stretch: cysteine 106–cysteine 509 and cysteine 138–cysteine 227. Asparagine 352 and asparagine 402 each carry an N-linked (GlcNAc...) asparagine glycan. Residues 373–496 form the Plastocyanin-like 3 domain; sequence TVPVLLQILS…VFAEDIPDVA (124 aa). Cu cation is bound by residues histidine 418, histidine 421, histidine 423, histidine 473, cysteine 474, histidine 475, and histidine 479.

The protein belongs to the multicopper oxidase family. Cu cation is required as a cofactor.

Its subcellular location is the secreted. The enzyme catalyses 4 hydroquinone + O2 = 4 benzosemiquinone + 2 H2O. In terms of biological role, lignin degradation and detoxification of lignin-derived products. This chain is Laccase (LAC), found in Phlebia radiata (White-rot fungus).